An 863-amino-acid polypeptide reads, in one-letter code: Receptor-like protein Cf-9 (863 aa).

An N-terminal signal peptide occupies residues 1–21; sequence MDCVKLVFLMLYTFLCQLALS. Residues 22 to 812 lie on the Extracellular side of the membrane; the sequence is SSLPHLCPED…EEDSPMISWQ (791 aa). The N-cap stretch occupies residues 24-91; that stretch reads LPHLCPEDQA…GVHCDETTGQ (68 aa). Residues Asn-48, Asn-72, Asn-109, Asn-127, Asn-142, Asn-191, Asn-204, and Asn-212 are each glycosylated (N-linked (GlcNAc...) asparagine). The LRR 1; degenerate repeat unit spans residues 92-115; it reads VIALDLRCSQLQGKFHSNSSLFQL. LRR repeat units lie at residues 116–139 and 141–164; these read SNLK…KFGE and SNLT…ICHL. The LRR 4; degenerate repeat unit spans residues 165–191; it reads SKLHVLRICDQYGLSLVPYNFELLLKN. LRR repeat units follow at residues 192-214, 215-238, 241-263, 265-287, 288-312, 314-335, 336-358, 359-382, 383-406, 408-428, 429-452, 454-476, 477-500, 502-524, 525-549, 551-572, 573-597, 599-623, 667-690, 691-714, 715-739, and 741-759; these read LTQL…SNFS, SHLT…VFHL, LQSL…KWNS, ASLM…SFSH, LTSL…LWNL, NIVF…FTIF, EKLK…LSFN, TQLE…ISGL, QNLE…IFSL, SLVE…EFKS, KTLS…LLNQ, NLQL…ICNL, KTLI…VVER, EYLS…TFSV, GNIL…MINC, YLTL…WLGY, LFQL…GNTN, FMGL…ILGN, LDSN…IIGD, LVGL…SFQN, LSVL…LASL, and FLEV…IPKG. The N-linked (GlcNAc...) asparagine glycan is linked to Asn-262. Asn-300 and Asn-311 each carry an N-linked (GlcNAc...) asparagine glycan. Residues Asn-378, Asn-396, and Asn-416 are each glycosylated (N-linked (GlcNAc...) asparagine). Asn-464 is a glycosylation site (N-linked (GlcNAc...) asparagine). Asn-519 carries an N-linked (GlcNAc...) asparagine glycan. Asn-563 carries N-linked (GlcNAc...) asparagine glycosylation. Asn-698 and Asn-714 each carry an N-linked (GlcNAc...) asparagine glycan. 2 N-linked (GlcNAc...) asparagine glycosylation sites follow: Asn-746 and Asn-767. The tract at residues 760–812 is C-cap/acidic domain; the sequence is KQFDSFGNTSYQGNDGLRGFPLSKLCGGEDQVTTPAELDQEEEEEDSPMISWQ. The chain crosses the membrane as a helical span at residues 813–833; it reads GVLVGYGCGLVIGLSVIYIMW. The Cytoplasmic segment spans residues 834 to 863; that stretch reads STQYPAWFSRMDLKLEHIITTKMKKHKKRY.

It belongs to the RLP family. As to quaternary structure, interacts with thioredoxin-like protein CITRX.

It is found in the cell membrane. Its function is as follows. Involved in plant defense. Confers resistance to the fungal pathogen C.fulvum through recognition of the AVR9 elicitor protein. The sequence is that of Receptor-like protein Cf-9 from Solanum pimpinellifolium (Currant tomato).